We begin with the raw amino-acid sequence, 65 residues long: Conotoxin Lp5.1 (65 aa).

Residues 1–22 form the signal peptide; that stretch reads MRCVPVFIILLLLIPSAPSVDA. The propeptide occupies 23–50; it reads QRKTKDDVPLASFHDNAKRTLKRLWNKR.

Belongs to the conotoxin T superfamily. In terms of processing, contains 2 disulfide bonds that can be either 'C1-C3, C2-C4' or 'C1-C4, C2-C3', since these disulfide connectivities have been observed for conotoxins with cysteine framework V (for examples, see AC P0DQQ7 and AC P81755). In terms of tissue distribution, expressed by the venom duct.

It is found in the secreted. This chain is Conotoxin Lp5.1, found in Conus leopardus (Leopard cone).